We begin with the raw amino-acid sequence, 156 residues long: Small ribosomal subunit protein uS7 (156 aa).

This sequence belongs to the universal ribosomal protein uS7 family. As to quaternary structure, part of the 30S ribosomal subunit. Contacts proteins S9 and S11.

One of the primary rRNA binding proteins, it binds directly to 16S rRNA where it nucleates assembly of the head domain of the 30S subunit. Is located at the subunit interface close to the decoding center, probably blocks exit of the E-site tRNA. The protein is Small ribosomal subunit protein uS7 of Bifidobacterium longum subsp. infantis (strain ATCC 15697 / DSM 20088 / JCM 1222 / NCTC 11817 / S12).